Reading from the N-terminus, the 269-residue chain is Autophagy-related protein 27 (269 aa).

Positions 1–17 are cleaved as a signal peptide; sequence MWAIAGLISVLLAQAAA. In terms of domain architecture, MRH spans 18–175; sequence FDCSAKELEH…SMYSKAACIT (158 aa). At 18 to 193 the chain is on the lumenal side; the sequence is FDCSAKELEH…PPKKPDNGES (176 aa). Cystine bridges form between Cys20–Cys59, Cys69–Cys76, and Cys141–Cys173. A helical transmembrane segment spans residues 194–214; that stretch reads WGWFTWIFIFLVLFLSIYIVG. Residues 215-269 are Cytoplasmic-facing; that stretch reads GAWFQYNKGNAIDFSSALREVLDNFVELLKGIPAFSREIIEKFTSNSNRGEYSAV.

This sequence belongs to the ATG27 family.

The protein localises to the cytoplasmic vesicle membrane. It localises to the golgi apparatus membrane. It is found in the mitochondrion membrane. Its subcellular location is the preautophagosomal structure membrane. Effector of VPS34 phosphatidylinositol 3-phosphate kinase signaling. Regulates the cytoplasm to vacuole transport (Cvt) vesicle formation. Plays a role in ATG protein retrieval from the pre-autophagosomal structure (PAS) and is especially required for autophagy-dependent cycling of ATG9. This is Autophagy-related protein 27 (ATG27) from Scheffersomyces stipitis (strain ATCC 58785 / CBS 6054 / NBRC 10063 / NRRL Y-11545) (Yeast).